A 185-amino-acid polypeptide reads, in one-letter code: Dirigent protein 12 (185 aa).

Positions 1–25 are cleaved as a signal peptide; that stretch reads MTNQIYKQVFSFFLSVLLLQSSTVS. Cys37 and Cys184 are disulfide-bonded. 2 N-linked (GlcNAc...) asparagine glycosylation sites follow: Asn56 and Asn120.

Belongs to the plant dirigent protein family. As to quaternary structure, homodimer. Seed coat specific expression.

The protein resides in the secreted. The protein localises to the extracellular space. Its subcellular location is the apoplast. Dirigent proteins impart stereoselectivity on the phenoxy radical-coupling reaction, yielding optically active lignans from two molecules of coniferyl alcohol in the biosynthesis of lignans, flavonolignans, and alkaloids and thus plays a central role in plant secondary metabolism. Required for seed accumulation of neolignans. This is Dirigent protein 12 (DIR12) from Arabidopsis thaliana (Mouse-ear cress).